Here is a 61-residue protein sequence, read N- to C-terminus: Large ribosomal subunit protein bL32 (61 aa).

Over residues 1 to 19 the composition is skewed to basic residues; it reads MAHPKRRQSKTRTAKRRTH. Residues 1 to 20 form a disordered region; sequence MAHPKRRQSKTRTAKRRTHD.

The protein belongs to the bacterial ribosomal protein bL32 family.

This chain is Large ribosomal subunit protein bL32, found in Porphyromonas gingivalis (strain ATCC 33277 / DSM 20709 / CIP 103683 / JCM 12257 / NCTC 11834 / 2561).